Consider the following 84-residue polypeptide: Magnetosome protein MamG (84 aa).

Residues 1–3 are Cytoplasmic-facing; that stretch reads MIK. The helical transmembrane segment at 4-24 threads the bilayer; it reads GIAGVGGTALGVGGGVAAPPV. Residues 25–40 lie on the Lumenal side of the membrane; the sequence is SAAAVGSTLLAGKGVC. The tract at residues 41 to 48 is LG repeat; sequence LGLGLGLG. The helical transmembrane segment at 41–61 threads the bilayer; the sequence is LGLGLGLGAWGPVLLGVAGLA. Topologically, residues 62–84 are cytoplasmic; the sequence is CAASLCDYLKNRKAQAEASAEPA.

The protein belongs to the magnetosome MamG (TC 9.B.95) protein family.

It localises to the magnetosome membrane. Plays a role in regulating magnetite crystal size. The sequence is that of Magnetosome protein MamG from Magnetospirillum gryphiswaldense (strain DSM 6361 / JCM 21280 / NBRC 15271 / MSR-1).